Consider the following 502-residue polypeptide: C2H2-type transcription factor MSN2 (502 aa).

C2H2-type zinc fingers lie at residues 385–408 (FVCHLCTRRFRRQEHLKRHFRSLH) and 414–436 (FACGECGKKFSRSDNLTQHSRIH).

It is found in the nucleus. Its function is as follows. Key downstream transcription factor in the HOG1-MAPK pathway. Plays crucial roles in the regulation of growth, conidiation, trap development and fatty acid metabolism. Negatively regulates secondary metabolism such as arthrobotrisins biosynthesis.Also regulates autophagy and endocytosis. In Arthrobotrys oligospora (strain ATCC 24927 / CBS 115.81 / DSM 1491) (Nematode-trapping fungus), this protein is C2H2-type transcription factor MSN2.